A 311-amino-acid chain; its full sequence is Chemotaxis protein CheV3 (311 aa).

Positions 13-164 (EIELVDFRIY…LESILDDLKL (152 aa)) constitute a CheW-like domain. The region spanning 182-308 (EVLFLDDSKT…FTEEISKILD (127 aa)) is the Response regulatory domain. Position 241 is a 4-aspartylphosphate (Asp241).

Its function is as follows. Plays a role in chemotaxis signal transduction system in order to colonize the host stomach. May act as a phosphate sink to control the flow of phosphate to CheAY. The sequence is that of Chemotaxis protein CheV3 from Helicobacter pylori (strain ATCC 700392 / 26695) (Campylobacter pylori).